A 266-amino-acid chain; its full sequence is 3-oxoadipate enol-lactonase 1 (266 aa).

Residues 28–250 (PAIVFSNSLG…DASHLSNIEQ (223 aa)) form the AB hydrolase-1 domain.

It carries out the reaction (4,5-dihydro-5-oxofuran-2-yl)-acetate + H2O = 3-oxoadipate + H(+). The protein operates within aromatic compound metabolism; beta-ketoadipate pathway; 3-oxoadipate from 5-oxo-4,5-dihydro-2-furylacetate: step 1/1. The chain is 3-oxoadipate enol-lactonase 1 (pcaD) from Acinetobacter baylyi (strain ATCC 33305 / BD413 / ADP1).